Here is a 327-residue protein sequence, read N- to C-terminus: Trypsin-like protease try-5 (327 aa).

The signal sequence occupies residues 1 to 21 (MRPRIIVFLFQVLVVIKGTKL). The region spanning 43 to 327 (AAGNTGNPTH…KFIVNFINQA (285 aa)) is the Peptidase S1 domain. Cysteines 73 and 89 form a disulfide. Catalysis depends on charge relay system residues His88 and Asp173. N-linked (GlcNAc...) asparagine glycosylation is present at Asn207. 2 disulfide bridges follow: Cys242–Cys256 and Cys266–Cys296. The Charge relay system role is filled by Ser270.

The protein belongs to the peptidase S1 family. Specifically expressed in the male gonad including the seminal vesicle, the valve region and the vas deferens.

The protein localises to the secreted. Its subcellular location is the cytoplasmic vesicle. It is found in the secretory vesicle lumen. With respect to regulation, in the male gonad, probably maintained inactive by swm-1. Serine protease which, in males, acts as a promoting signal during mating to activate sperm. This is Trypsin-like protease try-5 from Caenorhabditis elegans.